A 324-amino-acid chain; its full sequence is MKRTIAIVAGGDSSELVVSLRSAQGLYSFIDKERYNLYIVEMEGHRWEVVLPDGSKTPIDRNDFSFMENGEKKQFDFAYITIHGTPGENGILQGYFDLLGIPYSSCNVLVSAMTFNKFTCNQYLKGFGIRVAESLILRKGFEITDEEVINKIGLPCFIKPNAGGSSFGVTKVKTKEDIQPAIEKAFEESDEVMIEAFMKGTEITCGCYKTSDKEVVFPITEVVSANEFFDYGAKYNGESQEITPARLPEDTAERVRLLTSAIYDILGCSGLIRIDYIITEGEKVNLLEINTTPGMTATSFIPQQVRAAGLDIKDVMTDIIENKF.

The ATP-grasp domain maps to 121 to 321 (NQYLKGFGIR…IKDVMTDIIE (201 aa)). 149–204 (INKIGLPCFIKPNAGGSSFGVTKVKTKEDIQPAIEKAFEESDEVMIEAFMKGTEIT) provides a ligand contact to ATP. Residues aspartate 275, glutamate 288, and asparagine 290 each coordinate Mg(2+).

This sequence belongs to the D-alanine--D-alanine ligase family. Mg(2+) serves as cofactor. Requires Mn(2+) as cofactor.

The protein localises to the cytoplasm. It catalyses the reaction 2 D-alanine + ATP = D-alanyl-D-alanine + ADP + phosphate + H(+). It functions in the pathway cell wall biogenesis; peptidoglycan biosynthesis. Its function is as follows. Cell wall formation. The protein is D-alanine--D-alanine ligase of Phocaeicola vulgatus (strain ATCC 8482 / DSM 1447 / JCM 5826 / CCUG 4940 / NBRC 14291 / NCTC 11154) (Bacteroides vulgatus).